The chain runs to 476 residues: Glycogen synthase (476 aa).

Lysine 15 is an ADP-alpha-D-glucose binding site.

Belongs to the glycosyltransferase 1 family. Bacterial/plant glycogen synthase subfamily.

It carries out the reaction [(1-&gt;4)-alpha-D-glucosyl](n) + ADP-alpha-D-glucose = [(1-&gt;4)-alpha-D-glucosyl](n+1) + ADP + H(+). It functions in the pathway glycan biosynthesis; glycogen biosynthesis. Its function is as follows. Synthesizes alpha-1,4-glucan chains using ADP-glucose. The sequence is that of Glycogen synthase from Leptospira biflexa serovar Patoc (strain Patoc 1 / Ames).